Consider the following 196-residue polypeptide: Interleukin-23 subunit alpha (196 aa).

A signal peptide spans 1-21 (MLDCRAVIMLWLLPWVTQGLA).

Belongs to the IL-6 superfamily. In terms of assembly, heterodimer with IL12B; disulfide-linked. The heterodimer is known as interleukin IL-23. Interacts with IL23R; this interaction enables recruitment of IL12RB1. In terms of tissue distribution, secreted by activated dendritic cells (at protein level). Detected in various tissues with higher expression in polarized Th1 cells and activated macrophages.

The protein localises to the secreted. In terms of biological role, associates with IL12B to form the IL-23 interleukin, a heterodimeric cytokine which functions in innate and adaptive immunity. IL-23 may constitute with IL-17 an acute response to infection in peripheral tissues. IL-23 binds to a heterodimeric receptor complex composed of IL12RB1 and IL23R, activates the Jak-Stat signaling cascade, stimulates memory rather than naive T-cells and promotes production of pro-inflammatory cytokines. IL-23 induces autoimmune inflammation and thus may be responsible for autoimmune inflammatory diseases and may be important for tumorigenesis. Associates with IL12B to form the pro-inflammatory cytokine IL-23 that plays different roles in innate and adaptive immunity. Released by antigen-presenting cells such as dendritic cells or macrophages, binds to a heterodimeric receptor complex composed of IL12RB1 and IL23R to activate JAK2 and TYK2 which then phosphorylate the receptor to form a docking site leading to the phosphorylation of STAT3 and STAT4. This process leads to activation of several pathways including p38 MAPK or NF-kappa-B and promotes the production of pro-inflammatory cytokines such as interleukin-17A/IL17A. In turn, participates in the early and effective intracellular bacterial clearance. Promotes the expansion and survival of T-helper 17 cells, a CD4-positive helper T-cell subset that produces IL-17, as well as other IL-17-producing cells. The protein is Interleukin-23 subunit alpha (Il23a) of Mus musculus (Mouse).